A 180-amino-acid chain; its full sequence is FMN reductase (NADH) RutF (180 aa).

The protein belongs to the non-flavoprotein flavin reductase family. RutF subfamily.

The catalysed reaction is FMNH2 + NAD(+) = FMN + NADH + 2 H(+). Catalyzes the reduction of FMN to FMNH2 which is used to reduce pyrimidine by RutA via the Rut pathway. The protein is FMN reductase (NADH) RutF of Variovorax paradoxus (strain S110).